Reading from the N-terminus, the 429-residue chain is Trigger factor (429 aa).

The PPIase FKBP-type domain occupies 163–248 (GDFVVIDFVG…IKEIKVKETP (86 aa)).

Belongs to the FKBP-type PPIase family. Tig subfamily.

The protein resides in the cytoplasm. The enzyme catalyses [protein]-peptidylproline (omega=180) = [protein]-peptidylproline (omega=0). In terms of biological role, involved in protein export. Acts as a chaperone by maintaining the newly synthesized protein in an open conformation. Functions as a peptidyl-prolyl cis-trans isomerase. This is Trigger factor from Halothermothrix orenii (strain H 168 / OCM 544 / DSM 9562).